The sequence spans 1177 residues: MIDNKVSVCSVGKVVITEVATFASHPLYIDRKTALTMIRSTRAASRLRLGARYYASHAPYGVLSEHLKRTPRTNSQHYYPPPQGAHDLPKVSSMGDSIASIVRGRELWVQEKDKSDKPEKSDKPDKTDKTDKDKPEKQDKDKTDKPEKTKVSHTPSSTASTGAGEAAAPPSAPPSGSGSSSSSGGGSPPAKKKKSPAQTYPEILAVPISDRPLLPGFHRALVIRDPNVMKAIDEMITRGEPYLACFFLKEFSNADVIQDASEVHDIGVIAEIQIQSQDHKRSTVDASNEPVYVLILYPHKRVRLNSLKNPPSSGGAVSYASVSEDVAEDGELLLTSKDLEGYSEEFLEAREEAKKAKSGKTEDSKHDSKVTSKDGKETTEKYDSSTLQESPYSFLSTYDVSTAAISLIEDKPHDKNNRVITTLTNEILNVFKMLRAEDATLREQLSSVVGDILRTEPAVLQEPGRLADFAAALCAGEGKEIQAVLTALDLETRLNRALILLKREHTNAKLQQKIARDVENKLNSKHKKFLLTEQMKAIKKELGVDDGKEKLVEKFNERAEKLDMPENIQKVFEEEMTRLQSMEPSSSEYSVTRNYLDWITQIPWNKTTEDRFNLPQAKDVLDSEHYGMKEVKDRILEFIAVSRMKGGLTGKILLLQGPPGVGKTSIGKSIAKALNRQFYRFSVGGTNDASEVKGHRRTYVGAIPGRLVQALKQTQTENPLILIDEIDKLSSSRTQGDPGAALLEALDPEQNNAFLDHYLDVPIDLSKVLFVCTSNDLSTIPWPLLDRMEVIEMSGYVPDEKLNIANQYLVPQSKKETGLENVNVQVTDDAINALNRQYCRESGVRNLKKHIEKIFRKVVVKIVGEYGQDEVAAEKIIDVEPVEKDKESAEKKTTKSKSKEVNEEPAAKEEKDKATESAESSETKVGTKAPPVTVPEDYSLTIDEKDLYDYVNSPPYSSDRMFEDPPPGVVMGLAYSPLGGSALYIECILDGGLSADSSARLSSTGNLGNVMKESTNIAYSFAKSFMIRNFPANRFFERAGIHLHCPAGAISKDGPSAGCAVVTGLLSLALNHPIDSSISMTGEISLTGKVMKIGGLREKAVGAHSAGAKTIIIPKDNSGDWDELPDTVKEGLTPVFAGTYQDVYDVVFQGLDTKVAAEVWKKQFDLIDRKLDKRGSK.

Disordered regions lie at residues 72–197 (RTNS…KSPA) and 353–386 (AKKA…DSST). A compositionally biased stretch (basic and acidic residues) spans 103–150 (RGRELWVQEKDKSDKPEKSDKPDKTDKTDKDKPEKQDKDKTDKPEKTK). Residues 154–182 (TPSSTASTGAGEAAAPPSAPPSGSGSSSS) show a composition bias toward low complexity. The region spanning 203–505 (ILAVPISDRP…RALILLKREH (303 aa)) is the Lon N-terminal domain. Positions 353–383 (AKKAKSGKTEDSKHDSKVTSKDGKETTEKYD) are enriched in basic and acidic residues. 657 to 664 (GPPGVGKT) is an ATP binding site. Residues 883–916 (EKDKESAEKKTTKSKSKEVNEEPAAKEEKDKATE) are compositionally biased toward basic and acidic residues. Residues 883–932 (EKDKESAEKKTTKSKSKEVNEEPAAKEEKDKATESAESSETKVGTKAPPV) are disordered. A Lon proteolytic domain is found at 964-1150 (DPPPGVVMGL…QDVYDVVFQG (187 aa)). Catalysis depends on residues Ser-1056 and Lys-1099.

The protein belongs to the peptidase S16 family. As to quaternary structure, homohexamer or homoheptamer. Organized in a ring with a central cavity.

It is found in the mitochondrion matrix. It catalyses the reaction Hydrolysis of proteins in presence of ATP.. Its function is as follows. ATP-dependent serine protease that mediates the selective degradation of misfolded, unassembled or oxidatively damaged polypeptides as well as certain short-lived regulatory proteins in the mitochondrial matrix. May also have a chaperone function in the assembly of inner membrane protein complexes. Participates in the regulation of mitochondrial gene expression and in the maintenance of the integrity of the mitochondrial genome. Binds to mitochondrial DNA in a site-specific manner. This is Lon protease homolog, mitochondrial from Yarrowia lipolytica (strain CLIB 122 / E 150) (Yeast).